The sequence spans 185 residues: Ribosome-recycling factor (185 aa).

This sequence belongs to the RRF family.

It is found in the cytoplasm. In terms of biological role, responsible for the release of ribosomes from messenger RNA at the termination of protein biosynthesis. May increase the efficiency of translation by recycling ribosomes from one round of translation to another. This Corynebacterium aurimucosum (strain ATCC 700975 / DSM 44827 / CIP 107346 / CN-1) (Corynebacterium nigricans) protein is Ribosome-recycling factor.